Consider the following 259-residue polypeptide: 4-hydroxy-tetrahydrodipicolinate reductase (259 aa).

9–14 (GANGRM) lines the NAD(+) pocket. Residue R37 coordinates NADP(+). Residues 92-94 (GTT) and 116-119 (ASNM) each bind NAD(+). The active-site Proton donor/acceptor is the H149. A (S)-2,3,4,5-tetrahydrodipicolinate-binding site is contributed by H150. The Proton donor role is filled by K153. 159-160 (GT) contributes to the (S)-2,3,4,5-tetrahydrodipicolinate binding site.

It belongs to the DapB family.

It is found in the cytoplasm. It catalyses the reaction (S)-2,3,4,5-tetrahydrodipicolinate + NAD(+) + H2O = (2S,4S)-4-hydroxy-2,3,4,5-tetrahydrodipicolinate + NADH + H(+). The catalysed reaction is (S)-2,3,4,5-tetrahydrodipicolinate + NADP(+) + H2O = (2S,4S)-4-hydroxy-2,3,4,5-tetrahydrodipicolinate + NADPH + H(+). It participates in amino-acid biosynthesis; L-lysine biosynthesis via DAP pathway; (S)-tetrahydrodipicolinate from L-aspartate: step 4/4. Catalyzes the conversion of 4-hydroxy-tetrahydrodipicolinate (HTPA) to tetrahydrodipicolinate. The chain is 4-hydroxy-tetrahydrodipicolinate reductase from Desulfovibrio desulfuricans (strain ATCC 27774 / DSM 6949 / MB).